Consider the following 79-residue polypeptide: Hemoglobin subunit zeta (79 aa).

S1 is modified (N-acetylserine). Positions 1–79 (SLTKTXXTII…FKLLSHXFLV (79 aa)) constitute a Globin domain. A phosphoserine mark is found at S38 and S53. H59 contributes to the heme b binding site.

It belongs to the globin family. In terms of assembly, heterotetramer of two zeta chains and two epsilon chains.

The zeta chain is an alpha-type chain of mammalian embryonic hemoglobin. The chain is Hemoglobin subunit zeta from Notamacropus eugenii (Tammar wallaby).